The sequence spans 1635 residues: Cortactin-binding protein 2 (1635 aa).

Disordered regions lie at residues 1–20 (MATAGGSGQPLCSGPPARTS), 193–219 (ASKLDAEKRKTGELEGALSAERQKSSQ), 264–469 (EQLR…DNLV), and 483–582 (SRFT…PHGI). A coiled-coil region spans residues 116–273 (RKMQERMSAQ…EQLRKGNDHK (158 aa)). 2 stretches are compositionally biased toward basic and acidic residues: residues 193–205 (ASKLDAEKRKTGE) and 264–274 (EQLRKGNDHKP). 2 stretches are compositionally biased toward low complexity: residues 320 to 331 (PPVAVPAKPSSA) and 375 to 395 (GPSSGSTPEPTGSALMPLLNN). A compositionally biased stretch (polar residues) spans 402–414 (SQNHSLTSSTPNL). Positions 439 to 453 (QGNANDQDQNGNTTQ) are enriched in low complexity. Residues 454 to 466 (SPPSREVSPTSRD) are compositionally biased toward polar residues. Arg484 is modified (asymmetric dimethylarginine). ANK repeat units lie at residues 697–727 (GRPTRLHQAAAQGNVTLLSVLLNEEGLDINH), 731–760 (DGSSALYSAAKNGHTDCVRLLLNANAQVDD), 764–793 (NGFTPLCSAAAQGHVKCAELLIAYHADINH), 797–826 (GGQTPLYLACKNGNNECIKLLLEAGTDRSI), 830–859 (DGWTPVHAAVDSGNVDSLTLLMYYGGPESE), and 893–923 (EGWTAAHIAASKGLKNCLEILCGHGRLEAER). The tract at residues 856 to 876 (PESENSGSKDQTGLGSREESR) is disordered. Positions 858–869 (SENSGSKDQTGL) are enriched in polar residues. Positions 1420–1469 (SHRKKGESGSWRKVNTSPRKKSGLSSSQTWTKQEATKDGVRNDTGHQNGN) are disordered. Over residues 1432-1452 (KVNTSPRKKSGLSSSQTWTKQ) the composition is skewed to polar residues. The segment covering 1453 to 1463 (EATKDGVRNDT) has biased composition (basic and acidic residues). The residue at position 1498 (Ser1498) is a Phosphoserine. The segment at 1531 to 1624 (RMFGSSRTDP…RQREINNNLK (94 aa)) is disordered. 2 stretches are compositionally biased toward polar residues: residues 1546-1555 (PTMSDRSLPS) and 1563-1577 (LSSNPTLECSNNTPK). Residues 1615 to 1624 (RQREINNNLK) show a composition bias toward basic and acidic residues.

As to quaternary structure, interacts with CTTN/cortactin SH3 domain. Interacts with STRN, STRN4/zinedin and MOB4/phocein; this interactions mediate the association with the STRIPAK core complex and may regulate dendritic spine distribution of the STRIPAK complex in hippocampal neurons. Activation of glutamate receptors weakens the interaction with STRN and STRN4.

The protein localises to the cytoplasm. It localises to the cell cortex. The protein resides in the cell projection. Its subcellular location is the dendritic spine. Its function is as follows. Regulates the dendritic spine distribution of CTTN/cortactin in hippocampal neurons, and thus controls dendritic spinogenesis and dendritic spine maintenance. Associates with the striatin-interacting phosphatase and kinase (STRIPAK) core complex to regulate dendritic spine distribution of the STRIPAK complex in hippocampal neurons. The chain is Cortactin-binding protein 2 (CTTNBP2) from Ornithorhynchus anatinus (Duckbill platypus).